The primary structure comprises 208 residues: MKLSDVQKRLQAPFPAHTVSWKPAAFNAERTRALLLAHVDARAVQDRLDAVCPDDWSFEMEVVSGAEVPTVKGRLTVLGVTREDIGEAPEGSMAAYKAAASDAMKRCAVQFGIGRYLYDLPKQWADWDDARRGPKHLPELPEWARPDHERTPGGAHLVQAMEQLRYELPEDLDLQREVYKHLKAALGSIHPVPTGPVPTNPVQGGRAA.

This sequence belongs to the RAD52 family. Homooligomer composed of 8 to 10 subunits; probably arranged in a ring-structure.

Functionally, ssDNA-binding protein that contributes to the ionizing radiation resistance of D.radiodurans. Plays a role in DNA repair and genome reconstitution, in a RecA-independent process, since DdrA is essential for recovery from severe genomic fragmentation as a result of exposure to severe levels of ionizing radiation in an environment lacking nutrients. In vitro, binds to the 3'-ends of single-stranded DNA, protecting them from nuclease degradation. Thus, DdrA is part of a DNA end-protection system that helps to preserve genome integrity following irradiation or desiccation. Does not display DNA strand annealing activity, unlike eukaryotic Rad52 protein homologs. The polypeptide is Single-stranded DNA-binding protein DdrA (ddrA) (Deinococcus radiodurans (strain ATCC 13939 / DSM 20539 / JCM 16871 / CCUG 27074 / LMG 4051 / NBRC 15346 / NCIMB 9279 / VKM B-1422 / R1)).